Reading from the N-terminus, the 1522-residue chain is Lysophospholipase nte1 (1522 aa).

Residues 1–24 (MADGVTQVDSTGLHSFSPSPSLSS) are disordered. Residues 1-65 (MADGVTQVDS…LPPVPTTMAG (65 aa)) are Cytoplasmic-facing. Residues 15-24 (SFSPSPSLSS) show a composition bias toward low complexity. The helical transmembrane segment at 66 to 86 (WIGWVFSFFFQVIPSVLYWII) threads the bilayer. At 87–108 (TFSTITLPTWLFTLFSMSLTFT) the chain is on the lumenal side. Residues 109-129 (MNFTTLLLIVLAVVSTISWFI) traverse the membrane as a helical segment. Topologically, residues 130–1522 (RYRFLNMYSR…RTLAPRRASI (1393 aa)) are cytoplasmic. Disordered stretches follow at residues 308–384 (VPNS…SVHP), 523–544 (RAAT…GVSP), and 757–776 (TTTA…SRRR). Basic residues predominate over residues 369-381 (ESRKHSSRKRRKS). A nucleoside 3',5'-cyclic phosphate contacts are provided by residues 680-800 (GGTS…AVAS) and 840-960 (RLTS…IAQR). The 165-residue stretch at 1219 to 1383 (LVLGGGGARG…IDNLTVDHMK (165 aa)) folds into the PNPLA domain. The GXGXXG motif lies at 1223-1228 (GGGARG). Residues 1250–1254 (GTSIG) carry the GXSXG motif. S1252 serves as the catalytic Nucleophile. D1370 acts as the Proton acceptor in catalysis. The DGA/G signature appears at 1370–1372 (DGG). A disordered region spans residues 1501–1522 (LPEETEEKKKLQRTLAPRRASI).

The protein belongs to the NTE family.

It localises to the endoplasmic reticulum membrane. The enzyme catalyses a 1-acyl-sn-glycero-3-phosphocholine + H2O = sn-glycerol 3-phosphocholine + a fatty acid + H(+). Its activity is regulated as follows. Inhibited by organophosphorus esters. In terms of biological role, intracellular phospholipase B that catalyzes the double deacylation of phosphatidylcholine (PC) to glycerophosphocholine (GroPCho). Plays an important role in membrane lipid homeostasis. Responsible for the rapid PC turnover in response to inositol, elevated temperatures, or when choline is present in the growth medium. This chain is Lysophospholipase nte1 (nte1), found in Aspergillus fumigatus (strain ATCC MYA-4609 / CBS 101355 / FGSC A1100 / Af293) (Neosartorya fumigata).